Reading from the N-terminus, the 66-residue chain is Large ribosomal subunit protein uL29 (66 aa).

The protein belongs to the universal ribosomal protein uL29 family.

The sequence is that of Large ribosomal subunit protein uL29 from Borrelia hermsii (strain HS1 / DAH).